Reading from the N-terminus, the 582-residue chain is MESVKQRILTPGKEGLKNFAGKSLGQIYRVLEKKQDAGETIELTEDGKPLEVPEKKAPLCDCTCFGLPRRYIIAIMSGLGFCISFGIRCNLGVAIVDMVNNSTIHRGGKVIKEKAKFNWDPETVGMIHGSFFWGYIITQIPGGYIASRLAANRVFGAAILLTSTLNMLIPSAARVHYGCVIFVRILQGLVEGVTYPACHGIWSKWAPPLERSRLATTSFCGSYAGAVIAMPLAGILVQYTGWSSVFYVYGSFGMIWYMFWLLVSYESPAKHPTITDEERRYIEESIGESANLLGAMEKFKTPWRKFFTSMPVYAIIVANFCRSWTFYLLLISQPAYFEEVFGFEISKVGMLSAVPHLVMTIIVPIGGQIADFLRSKQILSTTTVRKIMNCGGFGMEATLLLVVGYSHTRGVAISFLVLAVGFSGFAISGFNVNHLDIAPRYASILMGISNGVGTLSGMVCPIIVGAMTKNKSREEWQYVFLIAALVHYGGVIFYAIFASGEKQPWADPEETSEEKCGFIHEDELDEETGDITQNYINYGTTKSYGATTQANGGWPNGWEKKEEFVQEEVQNSYNYKDRDDYS.

Topologically, residues 1–71 (MESVKQRILT…CTCFGLPRRY (71 aa)) are cytoplasmic. The helical transmembrane segment at 72–92 (IIAIMSGLGFCISFGIRCNLG) threads the bilayer. Over 93 to 125 (VAIVDMVNNSTIHRGGKVIKEKAKFNWDPETVG) the chain is Vesicular. Asparagine 100 and asparagine 101 each carry an N-linked (GlcNAc...) asparagine glycan. Residues 126-146 (MIHGSFFWGYIITQIPGGYIA) traverse the membrane as a helical segment. The Cytoplasmic segment spans residues 147-148 (SR). Residues 149–169 (LAANRVFGAAILLTSTLNMLI) traverse the membrane as a helical segment. Residues 170 to 177 (PSAARVHY) are Vesicular-facing. A helical transmembrane segment spans residues 178-198 (GCVIFVRILQGLVEGVTYPAC). The Cytoplasmic portion of the chain corresponds to 199 to 216 (HGIWSKWAPPLERSRLAT). A helical membrane pass occupies residues 217-237 (TSFCGSYAGAVIAMPLAGILV). At 238–244 (QYTGWSS) the chain is on the vesicular side. Residues 245–265 (VFYVYGSFGMIWYMFWLLVSY) form a helical membrane-spanning segment. Residues 266-310 (ESPAKHPTITDEERRYIEESIGESANLLGAMEKFKTPWRKFFTSM) lie on the Cytoplasmic side of the membrane. The helical transmembrane segment at 311–331 (PVYAIIVANFCRSWTFYLLLI) threads the bilayer. Residues 332–349 (SQPAYFEEVFGFEISKVG) lie on the Vesicular side of the membrane. Residues 350-370 (MLSAVPHLVMTIIVPIGGQIA) traverse the membrane as a helical segment. Over 371 to 386 (DFLRSKQILSTTTVRK) the chain is Cytoplasmic. The helical transmembrane segment at 387–407 (IMNCGGFGMEATLLLVVGYSH) threads the bilayer. The Vesicular segment spans residues 408-409 (TR). The helical transmembrane segment at 410 to 430 (GVAISFLVLAVGFSGFAISGF) threads the bilayer. Residues 431–443 (NVNHLDIAPRYAS) lie on the Cytoplasmic side of the membrane. Residues 444 to 464 (ILMGISNGVGTLSGMVCPIIV) traverse the membrane as a helical segment. Residues 465–477 (GAMTKNKSREEWQ) lie on the Vesicular side of the membrane. The N-linked (GlcNAc...) asparagine glycan is linked to asparagine 470. A helical membrane pass occupies residues 478–498 (YVFLIAALVHYGGVIFYAIFA). Over 499–582 (SGEKQPWADP…YNYKDRDDYS (84 aa)) the chain is Cytoplasmic.

This sequence belongs to the major facilitator superfamily. Sodium/anion cotransporter family. VGLUT subfamily.

The protein localises to the cytoplasmic vesicle. The protein resides in the secretory vesicle. Its subcellular location is the synaptic vesicle membrane. It localises to the synapse. It is found in the synaptosome. The protein localises to the cell membrane. The catalysed reaction is L-glutamate(out) = L-glutamate(in). It carries out the reaction 3 Na(+)(out) + phosphate(out) = 3 Na(+)(in) + phosphate(in). The enzyme catalyses phosphate(in) = phosphate(out). It catalyses the reaction K(+)(in) + H(+)(out) = K(+)(out) + H(+)(in). The catalysed reaction is chloride(in) = chloride(out). With respect to regulation, chloride channel activity is allosterically activated by lumenal H(+) and Cl(-) leading to synaptic vesicles acidification. The L-glutamate transport activity is allosterically activated by lumenal H(+) and Cl(-). The allosteric requirement for H(+) efficiently prevents non-vesicular efflux across the plasma membrane. The L-glutamate uniporter activity exhibits a biphasic dependence on chloride concentration. Its function is as follows. Multifunctional transporter that transports L-glutamate as well as multiple ions such as chloride, proton, potassium, sodium and phosphate. At the synaptic vesicle membrane, mainly functions as a uniporter which transports preferentially L-glutamate but also, phosphate from the cytoplasm into synaptic vesicles at presynaptic nerve terminals of excitatory neural cells. The L-glutamate or phosphate uniporter activity is electrogenic and is driven by the proton electrochemical gradient, mainly by the electrical gradient established by the vacuolar H(+)-ATPase across the synaptic vesicle membrane. In addition, functions as a chloride channel that allows a chloride permeation through the synaptic vesicle membrane therefore affects the proton electrochemical gradient and promotes synaptic vesicles acidification. Moreover, functions as a vesicular K(+)/H(+) antiport allowing to maintain the electrical gradient and to decrease chemical gradient and therefore sustain vesicular L-glutamate uptake. The vesicular H(+)/H(+) antiport activity is electroneutral. At the plasma membrane, following exocytosis, functions as a symporter of Na(+) and phosphate from the extracellular space to the cytoplasm allowing synaptic phosphate homeostasis regulation. The symporter activity is driven by an inside negative membrane potential and is electrogenic. Also involved in the regulation of retinal hyaloid vessel regression during postnatal development. May also play a role in the endocrine L-glutamatergic system of other tissues such as pineal gland and pancreas. The protein is Vesicular glutamate transporter 2 of Bos taurus (Bovine).